Reading from the N-terminus, the 341-residue chain is NADH-quinone oxidoreductase subunit H 2 (341 aa).

A run of 8 helical transmembrane segments spans residues 13–33 (IIVIGQSVLLLVLLLISIAYI), 82–102 (GVFLLAPLVTCVLALAAWAVI), 115–135 (VGVLYILAVSSLSVYGIIMAG), 161–181 (IGFVVICVLLCVGSLNLTAIV), 190–210 (MLGWYWLPLFPMFVVFYVSAL), 248–268 (YVAIVTMCAMGTILFLGGWLP), 277–297 (WVPGIVWFALKVLFMFFLFAM), and 317–337 (VFLPLSLAMVVIVAAVLQFAG).

The protein belongs to the complex I subunit 1 family. NDH-1 is composed of 14 different subunits. Subunits NuoA, H, J, K, L, M, N constitute the membrane sector of the complex.

The protein localises to the cell inner membrane. The enzyme catalyses a quinone + NADH + 5 H(+)(in) = a quinol + NAD(+) + 4 H(+)(out). In terms of biological role, NDH-1 shuttles electrons from NADH, via FMN and iron-sulfur (Fe-S) centers, to quinones in the respiratory chain. The immediate electron acceptor for the enzyme in this species is believed to be ubiquinone. Couples the redox reaction to proton translocation (for every two electrons transferred, four hydrogen ions are translocated across the cytoplasmic membrane), and thus conserves the redox energy in a proton gradient. This subunit may bind ubiquinone. The polypeptide is NADH-quinone oxidoreductase subunit H 2 (Rhodopseudomonas palustris (strain BisB5)).